Reading from the N-terminus, the 409-residue chain is Lissencephaly-1 homolog (409 aa).

Positions 7–39 constitute a LisH domain; sequence QEEELRFAVADYLQSCGYTNALEAFKKDASIPK. Residues 56–81 are a coiled coil; the sequence is SVVRLQKKVMDLELRLNNTTREMNSG. The segment covering 75–92 has biased composition (polar residues); it reads TREMNSGVPTRNSRSSND. The segment at 75–105 is disordered; the sequence is TREMNSGVPTRNSRSSNDWIPRPPEKHSLSG. 7 WD repeats span residues 105–146, 147–186, 189–228, 231–270, 273–332, 335–374, and 377–409; these read GHRS…RTLR, GHTD…CRMT, GHDH…CVYN, GHRE…CKEE, GHEH…CLFS, GHDN…CSKS, and AHNH…WECR.

The protein belongs to the WD repeat LIS1/nudF family.

It is found in the cytoplasm. It localises to the cytoskeleton. Its subcellular location is the microtubule organizing center. The protein resides in the centrosome. In terms of biological role, positively regulates the activity of the minus-end directed microtubule motor protein dynein. May enhance dynein-mediated microtubule sliding by targeting dynein to the microtubule plus end. Required for several dynein- and microtubule-dependent processes. The chain is Lissencephaly-1 homolog from Trichoplax adhaerens (Trichoplax reptans).